The chain runs to 465 residues: ATP synthase subunit beta (465 aa).

153–160 is a binding site for ATP; it reads GGAGVGKT.

Belongs to the ATPase alpha/beta chains family. F-type ATPases have 2 components, CF(1) - the catalytic core - and CF(0) - the membrane proton channel. CF(1) has five subunits: alpha(3), beta(3), gamma(1), delta(1), epsilon(1). CF(0) has three main subunits: a(1), b(2) and c(9-12). The alpha and beta chains form an alternating ring which encloses part of the gamma chain. CF(1) is attached to CF(0) by a central stalk formed by the gamma and epsilon chains, while a peripheral stalk is formed by the delta and b chains.

Its subcellular location is the cell membrane. The enzyme catalyses ATP + H2O + 4 H(+)(in) = ADP + phosphate + 5 H(+)(out). In terms of biological role, produces ATP from ADP in the presence of a proton gradient across the membrane. The catalytic sites are hosted primarily by the beta subunits. The chain is ATP synthase subunit beta from Clostridium perfringens (strain ATCC 13124 / DSM 756 / JCM 1290 / NCIMB 6125 / NCTC 8237 / Type A).